A 62-amino-acid polypeptide reads, in one-letter code: Large ribosomal subunit protein eL24 (62 aa).

Residues Cys-7, Cys-10, Cys-33, and Cys-37 each contribute to the Zn(2+) site. The C4-type zinc-finger motif lies at 7–37 (CSFCGREIEPGTGIMYVKNDGSILWFCSRKC).

This sequence belongs to the eukaryotic ribosomal protein eL24 family. In terms of assembly, part of the 50S ribosomal subunit. Forms a cluster with proteins L3 and L14. The cofactor is Zn(2+).

Binds to the 23S rRNA. The polypeptide is Large ribosomal subunit protein eL24 (Staphylothermus marinus (strain ATCC 43588 / DSM 3639 / JCM 9404 / F1)).